Consider the following 318-residue polypeptide: DNA polymerase IV (318 aa).

Residues 6-186 (IIHIDMDAFY…LPLGKIPGVG (181 aa)) enclose the UmuC domain. Mg(2+) contacts are provided by D10 and D104. Residue E105 is part of the active site.

Belongs to the DNA polymerase type-Y family. As to quaternary structure, monomer. Mg(2+) is required as a cofactor.

It localises to the cytoplasm. The enzyme catalyses DNA(n) + a 2'-deoxyribonucleoside 5'-triphosphate = DNA(n+1) + diphosphate. Poorly processive, error-prone DNA polymerase involved in untargeted mutagenesis. Copies undamaged DNA at stalled replication forks, which arise in vivo from mismatched or misaligned primer ends. These misaligned primers can be extended by PolIV. Exhibits no 3'-5' exonuclease (proofreading) activity. May be involved in translesional synthesis, in conjunction with the beta clamp from PolIII. The chain is DNA polymerase IV from Neisseria meningitidis serogroup B (strain ATCC BAA-335 / MC58).